The sequence spans 867 residues: DNA endonuclease RBBP8 (867 aa).

The interval 25-48 (ELWSKLKECHDKELQELLLKINKL) is essential for binding to the MRN complex and for RPA focus formation on DNA damage. 2 coiled-coil regions span residues 38–87 (LQEL…EDRL) and 120–141 (ITEL…SEQL). Disordered stretches follow at residues 141–171 (LHNM…PDSP) and 448–486 (RYGK…HSML). Residues 154-166 (ENPADTGEGEDGV) show a composition bias toward acidic residues. Positions 489–493 (PLDLS) match the PXDLS motif motif. The tract at residues 508–531 (SSRGRTKQTFALVPEKPDPKKPLH) is damage-recruitment motif. Phosphothreonine is present on residues T817 and T829. Positions 843–867 (SPCQRPRRRQPYNAKFSSKIKEQKT) are disordered.

It belongs to the COM1/SAE2/CtIP family. Homotetramer; formed by antiparallel association of helical extensions protruding from the N-termini of two parallel coiled-coil dimers. Interacts with the MRN complex; the interaction links DNA sensing to resection. Interacts with samhd1. Post-translationally, phosphorylation at Thr-817 and Thr-829 promote interaction with nbn and recruitment to double-strand breaks (DSBs).

Its subcellular location is the nucleus. It localises to the chromosome. In terms of biological role, endonuclease that cooperates with the MRE11-RAD50-NBN (MRN) complex in DNA-end resection, the first step of double-strand break (DSB) repair through the homologous recombination (HR) pathway. Functions downstream of the MRN complex and ATM, promotes ATR activation and its recruitment to DSBs in the S/G2 phase facilitating the generation of ssDNA. Specifically promotes the endonuclease activity of the MRN complex to clear DNA ends containing protein adducts: recruited to DSBs by nbn following phosphorylation, and promotes the endonuclease of mre11 to clear protein-DNA adducts and generate clean double-strand break ends. This chain is DNA endonuclease RBBP8 (rbbp8), found in Xenopus tropicalis (Western clawed frog).